The primary structure comprises 120 residues: MFLLPKYDSFWLFLLIASLIPVSAFSISKILAPVSQGPEKLTSYESGIEPMGDAWIQFQIRYYMFALVFVIFDVETVFLYPWAMSFKELGISAFIEALIFVLILIIGLIYAWRKGALEWS.

Helical transmembrane passes span 10 to 30 (FWLF…ISKI), 64 to 84 (MFAL…PWAM), and 89 to 109 (LGIS…IGLI).

Belongs to the complex I subunit 3 family. NDH is composed of at least 16 different subunits, 5 of which are encoded in the nucleus.

The protein resides in the plastid. It is found in the chloroplast thylakoid membrane. It carries out the reaction a plastoquinone + NADH + (n+1) H(+)(in) = a plastoquinol + NAD(+) + n H(+)(out). It catalyses the reaction a plastoquinone + NADPH + (n+1) H(+)(in) = a plastoquinol + NADP(+) + n H(+)(out). Functionally, NDH shuttles electrons from NAD(P)H:plastoquinone, via FMN and iron-sulfur (Fe-S) centers, to quinones in the photosynthetic chain and possibly in a chloroplast respiratory chain. The immediate electron acceptor for the enzyme in this species is believed to be plastoquinone. Couples the redox reaction to proton translocation, and thus conserves the redox energy in a proton gradient. The protein is NAD(P)H-quinone oxidoreductase subunit 3, chloroplastic of Angiopteris evecta (Mule's foot fern).